Consider the following 156-residue polypeptide: Small ribosomal subunit protein uS7 (156 aa).

This sequence belongs to the universal ribosomal protein uS7 family. In terms of assembly, part of the 30S ribosomal subunit. Contacts proteins S9 and S11.

One of the primary rRNA binding proteins, it binds directly to 16S rRNA where it nucleates assembly of the head domain of the 30S subunit. Is located at the subunit interface close to the decoding center, probably blocks exit of the E-site tRNA. The polypeptide is Small ribosomal subunit protein uS7 (Rhodococcus opacus (strain B4)).